The primary structure comprises 303 residues: MEIQNDQWVSAFLLYLKMEKNHSPHTIVNYELDLRHFRDFMEQQSIPSFAAVSYAFVRHYLTVLYEQEYARSTVSRKLSTLRSFYQFLVREKWVMENPFLLAHTPKGVKKLPSFLYEEEMEQLLDALNGDSPLQLRNRALFETIYASGLRVSECCGLKLQDVDLSIGTVFVFGKGRKERYVPIGSFACDAIQEYIENGREKLLKKSKSVDLPGDLFLNYRGGPLTERGVRKILHQALDQAALSTRVSPHSLRHSFATHLLNNGADLRVVQDLLGHENLSTTQVYTHVTKDRLRDVYRTHHPRA.

The Core-binding (CB) domain maps to 3–89 (IQNDQWVSAF…TLRSFYQFLV (87 aa)). The 188-residue stretch at 110–297 (KLPSFLYEEE…TKDRLRDVYR (188 aa)) folds into the Tyr recombinase domain. Catalysis depends on residues Arg150, Lys174, His249, Arg252, and His275. Tyr284 serves as the catalytic O-(3'-phospho-DNA)-tyrosine intermediate.

Belongs to the 'phage' integrase family. XerC subfamily. As to quaternary structure, forms a cyclic heterotetrameric complex composed of two molecules of XerC and two molecules of XerD.

The protein localises to the cytoplasm. In terms of biological role, site-specific tyrosine recombinase, which acts by catalyzing the cutting and rejoining of the recombining DNA molecules. The XerC-XerD complex is essential to convert dimers of the bacterial chromosome into monomers to permit their segregation at cell division. It also contributes to the segregational stability of plasmids. The sequence is that of Tyrosine recombinase XerC from Halalkalibacterium halodurans (strain ATCC BAA-125 / DSM 18197 / FERM 7344 / JCM 9153 / C-125) (Bacillus halodurans).